A 766-amino-acid polypeptide reads, in one-letter code: MKEKSKNAARTRREKENSEFYELAKLLPLPSAITSQLDKASIIRLTTSYLKMRVVFPEGLGEAWGHSSWTSPLDNVGRELGSHLLQTLDGFIFVVAPDGKIMYISETASVHLGLSQVELTGNSIYEYIHPADHDEMTAVLTAHQPYHSHFVQEYEIERSFFLRMKCVLAKRNAGLTCGGYKVIHCSGYLKIRQYSLDMSPFDGCYQNVGLVAVGHSLPPSAVTEIKLHSNMFMFRASLDMKLIFLDSRVAELTGYEPQDLIEKTLYHHVHGCDTFHLRCAHHLLLVKGQVTTKYYRFLAKHGGWVWVQSYATIVHNSRSSRPHCIVSVNYVLTDTEYKGLQLSLDQISASKPAFSYTSSSTPTMTDNRKGAKSRLSSSKSKSRTSPYPQYSGFHTERSESDHDSQWGGSPLTDTASPQLLDPADRPGSQHDASCAYRQFSDRSSLCYGFALDHSRLVEERHFHTQACEGGRCEAGRYFLGTPQAGREPWWGSRAALPLTKASPESREAYENSMPHIASVHRIHGRGHWDEDSVVSSPDPGSASESGDRYRTEQYQSSPHEPSKIETLIRATQQMIKEEENRLQLRKAPSDQLASINGAGKKHSLCFANYQQPPPTGEICHGSALANTSPCDHIQQREGKMLSPHENDYDNSPTALSRISSPNSDRISKSSLILAKDYLHSDISSHQTAGDHPTVSPNCFGSHRQYLDKHAYTLTGYALEHLYDSETIRNYSLGCNGSHFDVTSHLRMQPDPAQGHKGTSVIITNGS.

The bHLH domain occupies 1–53; sequence MKEKSKNAARTRREKENSEFYELAKLLPLPSAITSQLDKASIIRLTTSYLKMR. PAS domains follow at residues 77-147 and 218-288; these read GREL…QPYH and PPSA…LVKG. A PAC domain is found at 292–335; sequence TKYYRFLAKHGGWVWVQSYATIVHNSRSSRPHCIVSVNYVLTDT. Positions 336 to 766 constitute a Single-minded C-terminal domain; sequence EYKGLQLSLD…GTSVIITNGS (431 aa). Over residues 353–365 the composition is skewed to polar residues; that stretch reads AFSYTSSSTPTMT. Disordered regions lie at residues 353 to 431 and 528 to 563; these read AFSY…SQHD and WDEDSVVSSPDPGSASESGDRYRTEQYQSSPHEPSK. A Nuclear localization signal motif is present at residues 368 to 387; that stretch reads RKGAKSRLSSSKSKSRTSPY. Over residues 373–385 the composition is skewed to low complexity; the sequence is SRLSSSKSKSRTS. Basic and acidic residues predominate over residues 394 to 404; sequence HTERSESDHDS.

As to quaternary structure, efficient DNA binding requires dimerization with another bHLH protein. Heterodimer; forms a heterodimer with ARNT, ARNT2.

The protein resides in the nucleus. Its function is as follows. Transcriptional factor that may have pleiotropic effects during embryogenesis and in the adult. The sequence is that of Single-minded homolog 1 (SIM1) from Pan paniscus (Pygmy chimpanzee).